The chain runs to 294 residues: Mitochondrial glycine transporter (294 aa).

Solcar repeat units lie at residues 5-84, 102-186, and 208-292; these read RRAT…IRQA, LNMY…MKVL, and ASTL…IVKK. The next 6 membrane-spanning stretches (helical) occupy residues 11–36, 59–85, 108–133, 161–184, 212–238, and 267–285; these read LIGG…TRLQ, GALP…RQAI, MFSG…VRYE, GFGA…DRMK, INGS…KTRM, and GISL…AWGI.

Belongs to the mitochondrial carrier (TC 2.A.29) family. SLC25A38 subfamily.

The protein localises to the mitochondrion inner membrane. It catalyses the reaction glycine(in) = glycine(out). Mitochondrial glycine transporter that imports glycine into the mitochondrial matrix. Plays an important role in providing glycine for the first enzymatic step in heme biosynthesis, the condensation of glycine with succinyl-CoA to produce 5-aminolevulinate (ALA) in the mitochondrial matrix. The chain is Mitochondrial glycine transporter from Kluyveromyces lactis (strain ATCC 8585 / CBS 2359 / DSM 70799 / NBRC 1267 / NRRL Y-1140 / WM37) (Yeast).